We begin with the raw amino-acid sequence, 115 residues long: MNVMLTLMTNVTLASLLVLIAFWLPQLNIYTDKTSPYECGFDPMGSARLPFSMKFFLVAITFLLFDLEIALLLPLPWASQTNKLTTMLIMALLLISLLAASLAYEWTEKGLEWTE.

Transmembrane regions (helical) follow at residues 3–23 (VMLT…IAFW), 55–75 (FFLV…LLPL), and 84–104 (LTTM…SLAY).

It belongs to the complex I subunit 3 family. As to quaternary structure, core subunit of respiratory chain NADH dehydrogenase (Complex I) which is composed of 45 different subunits. Interacts with TMEM186. Interacts with TMEM242.

It localises to the mitochondrion inner membrane. The enzyme catalyses a ubiquinone + NADH + 5 H(+)(in) = a ubiquinol + NAD(+) + 4 H(+)(out). Core subunit of the mitochondrial membrane respiratory chain NADH dehydrogenase (Complex I) which catalyzes electron transfer from NADH through the respiratory chain, using ubiquinone as an electron acceptor. Essential for the catalytic activity of complex I. This Canis lupus familiaris (Dog) protein is NADH-ubiquinone oxidoreductase chain 3.